We begin with the raw amino-acid sequence, 251 residues long: Hydroxyacylglutathione hydrolase (251 aa).

The Zn(2+) site is built by His53, His55, Asp57, His58, His110, Asp127, and His165.

It belongs to the metallo-beta-lactamase superfamily. Glyoxalase II family. In terms of assembly, monomer. Zn(2+) serves as cofactor.

It carries out the reaction an S-(2-hydroxyacyl)glutathione + H2O = a 2-hydroxy carboxylate + glutathione + H(+). Its pathway is secondary metabolite metabolism; methylglyoxal degradation; (R)-lactate from methylglyoxal: step 2/2. Thiolesterase that catalyzes the hydrolysis of S-D-lactoyl-glutathione to form glutathione and D-lactic acid. In Escherichia coli (strain ATCC 8739 / DSM 1576 / NBRC 3972 / NCIMB 8545 / WDCM 00012 / Crooks), this protein is Hydroxyacylglutathione hydrolase.